We begin with the raw amino-acid sequence, 199 residues long: Fe/S biogenesis protein NfuA (199 aa).

[4Fe-4S] cluster contacts are provided by C151 and C154.

The protein belongs to the NfuA family. As to quaternary structure, homodimer. [4Fe-4S] cluster is required as a cofactor.

In terms of biological role, involved in iron-sulfur cluster biogenesis. Binds a 4Fe-4S cluster, can transfer this cluster to apoproteins, and thereby intervenes in the maturation of Fe/S proteins. Could also act as a scaffold/chaperone for damaged Fe/S proteins. The chain is Fe/S biogenesis protein NfuA from Xylella fastidiosa (strain 9a5c).